The chain runs to 65 residues: MSQLKITQVRSTIGARWKQRESLRTLGLRRIRHSVIREDNAATRGLIAVVRHLVEVEPAQTGGKT.

The protein belongs to the universal ribosomal protein uL30 family. As to quaternary structure, part of the 50S ribosomal subunit.

This is Large ribosomal subunit protein uL30 from Mycobacterium bovis (strain ATCC BAA-935 / AF2122/97).